A 300-amino-acid chain; its full sequence is MTKHLPTISDISPLLKAEILAEALPYIRAYHGKTIVIKYGGNAMVEERLKESFARDVILLKLVGMNPVVVHGGGPQIDEALKKIGKTGTFIQGMRVTDEETMEVVEWVLGGEVQQDIVMLINHFGGQAVGLTGKDGGLIHAKKMMIPSDAEPGKKIDIGFVGEIEAINPAVVKALQDDAFIPVISPIGFSAEGQAYNINADLVAGKMAEILHAEKLVMMTNIPGVMDKDGKLLTDLTAREIDALFADGTISGGMLPKISSALDAAKSGVNSVHIIDGRIEHSLLLEILTEQAFGTMIRSR.

Substrate-binding positions include 73–74, arginine 95, and asparagine 197; that span reads GG.

It belongs to the acetylglutamate kinase family. ArgB subfamily.

The protein localises to the cytoplasm. The enzyme catalyses N-acetyl-L-glutamate + ATP = N-acetyl-L-glutamyl 5-phosphate + ADP. It participates in amino-acid biosynthesis; L-arginine biosynthesis; N(2)-acetyl-L-ornithine from L-glutamate: step 2/4. Functionally, catalyzes the ATP-dependent phosphorylation of N-acetyl-L-glutamate. In Polynucleobacter asymbioticus (strain DSM 18221 / CIP 109841 / QLW-P1DMWA-1) (Polynucleobacter necessarius subsp. asymbioticus), this protein is Acetylglutamate kinase.